Reading from the N-terminus, the 1338-residue chain is MDSFNNNNNNNNNNNNNNNNINGEGITLRTLLNSCTNTSSNEQLIVNNVNKNSNIINNININNTPSPISTCINVNKIELRGSSNGIFLNSKIKVPLPNSTLLEQQQDGADEQDKKQQSLSDKNILFSSGDKEFLNHGSNNIITDQNTLLYQLQQQQQKEKEKENDEIMNHDDIIGYNEENEDNFFNEGMDPILAHSIEHHLHNHHHHHGEFDTQENEDTSGESSDESENIDEVLVYTEDIESEKEKKRERLITSPPSFDPHTLYSMSQSLLNCSLNNNNNNNNSISSPSSSINNSGNNINLNNSGNNNVNSNNNTNIINNSNDNFISQPLFNPLSMPNNEQYELLPNPTTTTSTITSTTTTTTITNLPPALPSFPSSSSIKSLKNSFGSNSITSSGELNNVFSSSMSPPMSPPNRNVRSLTFPGTNPINCINTSVINSITANTNCINHHHHHHQHNHHNHHQGHNNINNSGHIRKSADDTVTLSPTLSSGSSSTSSSNPHHPNHNHQKGLNNKTLEKLSCTRKEIYELIEKKESLIEKQNLIDEGYSENADSFENLSEEIQKINEKIIELENLITSLSNSNSNWSLNGSSTSTISCNPLSPRSMNPSSSTSSTSSNLTNSLRKFSQELKIELRPLDLRAELYSSINTSPRGSASISGGSGSGGGGNNNGCFKTSSNSSINSPIQFFENENESIDSYEKKNEEQFESLTQLIRENQLYTKPIEFKEIKLLEKLESNSKSSNIWQIEYKSTQLVLKQPKDQDSDKNIEKRKQLFNGSNVSGSNNSGSSGGNNHNHHHCNNSNGSNSEVIPSKYTMIQHKNLGLLVGWCGDSIIFESFKGMNSLHDLIHRDGLKIDMALFIKISKDIASVMGLLHSKDVAHGNLTSRSIYLDRFQIVKVSFPKLNATDLNNPAIEPRYMAPEMTRMEEDQISCSIDVYAYAFVLWEALTSHLPFRKFNDISVAAKVAYENLRPKIPTSCPLIIRKLINRCWAPLPSDRPTFNDILKLFDHLEGKLFFSSPGILWSLNNDQEVERELQKKERFNEITEFLRGKKEIKFDEVAIVEKVGAGSFANVFLGIWNGYKVAIKILKNESISNDEKFIKEVSSLIKSHHPNVVTFMGACIDPPCIFTEYLQGGSLYDVLHIQKIKLNPLMMYKMIHDLSLGMEHLHSIQMLHRDLTSKNILLDEFKNIKIADFGLATTLSDDMTLSGITNPRWRSPELTKGLVYNEKVDVYSFGLVVYEIYTGKIPFEGLDGTASAAKAAFENYRPAIPPDCPVSLRKLITKCWASDPSQRPSFTEILTELETMKSKFIKQLSFLNDLIQNPDDDYNNNLNYDEEVDS.

Disordered stretches follow at residues 1 to 21 (MDSF…NNNI), 203 to 254 (NHHH…LITS), 282 to 316 (NNSI…NNTN), 449 to 515 (HHHH…NKTL), 595 to 618 (SCNP…SNLT), and 648 to 673 (SPRG…CFKT). Residues 212-231 (DTQENEDTSGESSDESENID) are compositionally biased toward acidic residues. Residues 449–463 (HHHHHQHNHHNHHQG) are compositionally biased toward basic residues. Over residues 482–500 (TLSPTLSSGSSSTSSSNPH) the composition is skewed to low complexity. Positions 657–667 (GGSGSGGGGNN) are enriched in gly residues. Protein kinase domains lie at 693–1014 (IDSY…KLFF) and 1057–1309 (VAIV…SKFI). ATP contacts are provided by residues 699–707 (KNEEQFESL) and K727. The tract at residues 770-802 (QLFNGSNVSGSNNSGSSGGNNHNHHHCNNSNGS) is disordered. Residues 773-790 (NGSNVSGSNNSGSSGGNN) are compositionally biased toward low complexity. Residues 1063 to 1071 (VGAGSFANV) and K1084 each bind ATP. The active-site Proton acceptor is the D1174.

The protein belongs to the protein kinase superfamily. TKL Tyr protein kinase family. C-terminal tyrosine kinase domain is capable of autophosphorylation, in vitro.

The catalysed reaction is L-seryl-[protein] + ATP = O-phospho-L-seryl-[protein] + ADP + H(+). The enzyme catalyses L-threonyl-[protein] + ATP = O-phospho-L-threonyl-[protein] + ADP + H(+). It carries out the reaction L-tyrosyl-[protein] + ATP = O-phospho-L-tyrosyl-[protein] + ADP + H(+). Functionally, involved in the development. Negatively regulates tyrosine phosphorylation and activation state of dstC/STATc, probably by activating a dstC/STATc phosphatase. This chain is Dual specificity protein kinase pyk3 (pyk3), found in Dictyostelium discoideum (Social amoeba).